Consider the following 428-residue polypeptide: uncharacterized protein (428 aa).

Residues 1–49 (MRTQTFPPSSSSSRTTHPKKNRHSSNSSSMALVTPAKSSTGAAPKQSSQ) are disordered. Residues 24-49 (SSNSSSMALVTPAKSSTGAAPKQSSQ) are compositionally biased toward polar residues.

This is an uncharacterized protein from Caenorhabditis elegans.